Here is a 56-residue protein sequence, read N- to C-terminus: Preprotein translocase subunit SecG (56 aa).

The Cytoplasmic portion of the chain corresponds to 1–30 (MARKDKKTLPASGAGIVRYFNDDTAGVKLS). Residues 31 to 52 (PKQVVIGTIIVALICIALRFTT) form a helical membrane-spanning segment. The Extracellular portion of the chain corresponds to 53–56 (SVGY).

Belongs to the SEC61-beta family. As to quaternary structure, component of the protein translocase complex. Heterotrimer consisting of alpha (SecY), beta (SecG) and gamma (SecE) subunits. Can form oligomers of the heterotrimer.

It localises to the cell membrane. Its function is as follows. Involved in protein export. The function of the beta subunit is unknown, but it may be involved in stabilization of the trimeric complex. The sequence is that of Preprotein translocase subunit SecG from Methanosphaera stadtmanae (strain ATCC 43021 / DSM 3091 / JCM 11832 / MCB-3).